The primary structure comprises 325 residues: Glutarate 2-hydroxylase (325 aa).

Positions 160, 162, and 292 each coordinate Fe cation.

It belongs to the glutarate hydroxylase family. As to quaternary structure, homotetramer. Requires Fe(2+) as cofactor.

It carries out the reaction glutarate + 2-oxoglutarate + O2 = (S)-2-hydroxyglutarate + succinate + CO2. It functions in the pathway amino-acid degradation. In terms of biological role, acts as an alpha-ketoglutarate-dependent dioxygenase catalyzing hydroxylation of glutarate (GA) to L-2-hydroxyglutarate (L2HG). Functions in a L-lysine degradation pathway that proceeds via cadaverine, glutarate and L-2-hydroxyglutarate. This is Glutarate 2-hydroxylase from Salmonella newport (strain SL254).